A 394-amino-acid polypeptide reads, in one-letter code: Gap junction gamma-1 protein (394 aa).

Residues Met-1 to Lys-22 are Cytoplasmic-facing. Residues Ile-23–Tyr-45 traverse the membrane as a helical segment. Residues Asp-46–Arg-75 are Extracellular-facing. Residues Phe-76–Ala-95 form a helical membrane-spanning segment. Over Ile-96 to Arg-176 the chain is Cytoplasmic. A helical transmembrane segment spans residues Ile-177–Leu-199. Residues Tyr-200 to Lys-229 lie on the Extracellular side of the membrane. A helical membrane pass occupies residues Thr-230–Leu-252. The Cytoplasmic portion of the chain corresponds to His-253–Ile-394. The tract at residues Ile-354–Ile-394 is disordered. Residues Ala-356 to Ser-366 are compositionally biased toward polar residues. Residues Ala-374–Ile-394 are compositionally biased toward low complexity.

Belongs to the connexin family. Gamma-type subfamily. A connexon is composed of a hexamer of connexins. As to expression, mostly in heart and stomach.

It localises to the cell membrane. The protein resides in the cell junction. Its subcellular location is the gap junction. In terms of biological role, one gap junction consists of a cluster of closely packed pairs of transmembrane channels, the connexons, through which materials of low MW diffuse from one cell to a neighboring cell. This is Gap junction gamma-1 protein (GJC1) from Gallus gallus (Chicken).